A 326-amino-acid chain; its full sequence is Protein TMED8 (326 aa).

A disordered region spans residues 1 to 99; that stretch reads MSDRQAAEGP…EGQAPGEQAA (99 aa). A compositionally biased stretch (low complexity) spans 50-65; it reads SSPLASASDPAAESSP. Positions 160 to 324 constitute a GOLD domain; sequence PPCVWTFAKV…NKTLYFHIYY (165 aa). Lys-170 carries the post-translational modification N6-acetyllysine. The disordered stretch occupies residues 234–268; that stretch reads VQVSDSSEDEEEEEDEEEEIEEPVPVGDVERGSRS. The segment covering 239 to 255 has biased composition (acidic residues); the sequence is SSEDEEEEEDEEEEIEE.

This chain is Protein TMED8 (Tmed8), found in Mus musculus (Mouse).